The primary structure comprises 341 residues: tRNA N6-adenosine threonylcarbamoyltransferase (341 aa).

2 residues coordinate Fe cation: H119 and H123. Substrate is bound by residues 141-145 (MVSGG), D174, G187, and N279. Residue D307 participates in Fe cation binding.

This sequence belongs to the KAE1 / TsaD family. It depends on Fe(2+) as a cofactor.

It is found in the cytoplasm. It carries out the reaction L-threonylcarbamoyladenylate + adenosine(37) in tRNA = N(6)-L-threonylcarbamoyladenosine(37) in tRNA + AMP + H(+). Functionally, required for the formation of a threonylcarbamoyl group on adenosine at position 37 (t(6)A37) in tRNAs that read codons beginning with adenine. Is involved in the transfer of the threonylcarbamoyl moiety of threonylcarbamoyl-AMP (TC-AMP) to the N6 group of A37, together with TsaE and TsaB. TsaD likely plays a direct catalytic role in this reaction. This chain is tRNA N6-adenosine threonylcarbamoyltransferase, found in Oenococcus oeni (strain ATCC BAA-331 / PSU-1).